The chain runs to 179 residues: ATP synthase subunit b, chloroplastic (179 aa).

A helical membrane pass occupies residues 28-46; sequence IINIAALVGILIYAGRDFL.

This sequence belongs to the ATPase B chain family. In terms of assembly, F-type ATPases have 2 components, F(1) - the catalytic core - and F(0) - the membrane proton channel. F(1) has five subunits: alpha(3), beta(3), gamma(1), delta(1), epsilon(1). F(0) has four main subunits: a(1), b(1), b'(1) and c(10-14). The alpha and beta chains form an alternating ring which encloses part of the gamma chain. F(1) is attached to F(0) by a central stalk formed by the gamma and epsilon chains, while a peripheral stalk is formed by the delta, b and b' chains.

It localises to the plastid. The protein resides in the chloroplast thylakoid membrane. Functionally, f(1)F(0) ATP synthase produces ATP from ADP in the presence of a proton or sodium gradient. F-type ATPases consist of two structural domains, F(1) containing the extramembraneous catalytic core and F(0) containing the membrane proton channel, linked together by a central stalk and a peripheral stalk. During catalysis, ATP synthesis in the catalytic domain of F(1) is coupled via a rotary mechanism of the central stalk subunits to proton translocation. Its function is as follows. Component of the F(0) channel, it forms part of the peripheral stalk, linking F(1) to F(0). This chain is ATP synthase subunit b, chloroplastic, found in Trieres chinensis (Marine centric diatom).